The primary structure comprises 788 residues: Protocadherin beta-18 (788 aa).

The first 28 residues, 1–28, serve as a signal peptide directing secretion; that stretch reads MEPGKGRAQPTRQVLLFFVFLGGSLVYS. Cadherin domains lie at 29–133, 134–242, 243–347, 348–452, and 453–562; these read ETWS…TPTF, LNNH…APEF, EKPV…PPEI, AMTS…APAF, and TQTS…SPFV. At 29–691 the chain is on the extracellular side; it reads ETWSYSIAEE…AQADSLTVYL (663 aa). N-linked (GlcNAc...) asparagine glycosylation occurs at Asn169. N-linked (GlcNAc...) asparagine glycans are attached at residues Asn419 and Asn437. A glycan (N-linked (GlcNAc...) asparagine) is linked at Asn568. The 104-residue stretch at 569 to 672 folds into the Cadherin 6 domain; the sequence is GSAPCTELVP…LVDGFSQPYL (104 aa). A helical transmembrane segment spans residues 692–712; sequence VVALASVSSLFLFSVFLFVAV. The Cytoplasmic portion of the chain corresponds to 713-788; the sequence is RLCRRSRAAS…DSDMEKAPPF (76 aa).

Its subcellular location is the cell membrane. In terms of biological role, potential calcium-dependent cell-adhesion protein. This chain is Protocadherin beta-18 (PCDHB18), found in Pan troglodytes (Chimpanzee).